Here is a 293-residue protein sequence, read N- to C-terminus: Non-structural protein NS-S (293 aa).

Residues 21-29 (VRLEPSLGE) are essential for inhibition of IFN-beta activation and interaction with host TBK1. The segment at 66 to 69 (PKNP) is involved in inclusion bodies formation. Residues 148 to 220 (FEGDMILDSL…KPLLDCWDFF (73 aa)) are interaction with host TNIP2.

The protein belongs to the Bandavirus NS-S protein family. As to quaternary structure, interacts with the host E3 ubiquitin ligase TRIM25; this interaction sequesters TRIM25 in NSs-induced cytoplasmic inclusion bodies. Interacts with the host E3 ubiquitin ligase RIGI; this interaction sequesters RIGI in NSs-induced cytoplasmic inclusion bodies. Interacts with the host E3 ubiquitin ligase TBK1 (via N-terminus); this interaction sequesters TBK1 in NSs-induced cytoplasmic inclusion bodies and inhibits TBK1 phosphorylation. NSs does not interact with IKBKE/IKKE or IRF3. Interacts with host IRF7; this interaction sequesters IRF7 in NSs-induced cytoplasmic inclusion bodies. Interacts with host SYNGR2; this interaction is essential to promoting the formation of the inclusion bodies to become virus factories for viral RNA replication through its interaction with NSs. Interacts with host STAT2; this interaction sequesters STAT2 in NSs-induced cytoplasmic inclusion bodies. Interacts with host TNIP2; this interaction promotes TPL2 complex formation and signaling activity leading to IL-10 production. Interacts with host TRIM21 (via B30.2/SPRY domain); this interaction activates host NFE2L2-mediated transcriptional activation of antioxidant genes. Interacts with host CDK1; this interaction is inclusion body dependent, it inhibits the formation and nuclear import of the cyclin B1-CDK1 complex and leads to host cell cycle arrest.

The protein resides in the host cytoplasm. It localises to the host cytoplasmic vesicle. Sequesters host STAT2 into viral inclusion bodies. Impairs IFN-stimulated phosphorylation and nuclear translocation of host STAT2, thereby suppressing type-I IFN antiviral signaling. Sequesters host TRIM25, RIGI, TBK1/IKK complex components (TBK1, IKBKE/IKKE, and IRF3) and IRF7 into viral inclusion bodies, thereby inhibiting the IFN responses. Inhibits TRIM25-mediated ubiquitination of the RIGI. The sequestration of IKBKE/IKKE, and IRF3 occurs via the interaction with TBK1. Sequestration and inhibition of host TBK1 probably participates to the cytokine storm induced by the virus. Also inhibits the phosphorylation of host TBK1. Interacts with host TNIP2 and promotes TPL2-TNIP2-p105 complex formation leading to IL-10 induction. By interacting with CDK1, induces host cell arrest at the G2/M transition to promote viral replication. Requested for the formation of the viral cytoplasmic inclusion bodies. The polypeptide is Non-structural protein NS-S (NSS) (SFTS phlebovirus (isolate SFTSV/Human/China/HB29/2010) (Severe fever with thrombocytopenia virus)).